The primary structure comprises 239 residues: Lactate utilization protein A (239 aa).

The protein belongs to the LutA/YkgE family.

Is involved in L-lactate degradation and allows cells to grow with lactate as the sole carbon source. The sequence is that of Lactate utilization protein A from Geobacillus thermodenitrificans (strain NG80-2).